A 147-amino-acid chain; its full sequence is Large ribosomal subunit protein uL23A (147 aa).

Positions 1–10 (MAPSAPAKTA) are enriched in low complexity. Residues 1-29 (MAPSAPAKTAKALDAKKKVVKGKRTTHRR) are disordered. Positions 18–29 (KVVKGKRTTHRR) are enriched in basic residues.

Belongs to the universal ribosomal protein uL23 family.

Its function is as follows. This protein binds to a specific region on the 26S rRNA. This chain is Large ribosomal subunit protein uL23A, found in Caenorhabditis elegans.